A 529-amino-acid polypeptide reads, in one-letter code: RE1-silencing transcription factor B (529 aa).

The C2H2-type 1 zinc finger occupies 156 to 178 (FRCKPCQYKAESEEEFVHHIKIH). The interval 188-210 (SNKKAQGNEADSSISEESDVSKG) is disordered. 7 C2H2-type zinc fingers span residues 212–234 (IQCD…LKHH), 244–266 (YKCT…LRNH), 272–294 (YTCS…IRTH), 300–322 (YQCI…MRTH), 328–351 (FKCE…RQVH), 357–379 (LTCP…VELH), and 385–408 (FLCP…KSRH). Residues 484–529 (LSSTQKKIKTSDARPEKILDKSRKSSCVKRKSDLLENSNDTQTSTV) form a disordered region. Positions 492-506 (KTSDARPEKILDKSR) are enriched in basic and acidic residues. Polar residues predominate over residues 518–529 (LENSNDTQTSTV).

The protein resides in the nucleus. Its subcellular location is the cytoplasm. In terms of biological role, transcriptional repressor which binds neuron-restrictive silencer element (NRSE) and represses neuronal gene transcription in non-neuronal cells. Plays a role in the early development of the nervous system and is required for proper patterning of the neuroectoderm during gastrulation. This involves the correct speciation of the neuroepithelial domain and adequate development of the non-neural ectoderm. The polypeptide is RE1-silencing transcription factor B (rest-b) (Xenopus laevis (African clawed frog)).